The following is a 404-amino-acid chain: Argininosuccinate synthase (404 aa).

ATP contacts are provided by residues 12 to 20 (AYSGGLDTS) and Ala39. L-citrulline is bound by residues Tyr91 and Ser96. Gly121 lines the ATP pocket. Positions 123, 127, and 128 each coordinate L-aspartate. L-citrulline is bound at residue Asn127. L-citrulline is bound by residues Arg131, Ser180, Ser189, Glu265, and Tyr277.

This sequence belongs to the argininosuccinate synthase family. Type 1 subfamily. As to quaternary structure, homotetramer.

The protein localises to the cytoplasm. The catalysed reaction is L-citrulline + L-aspartate + ATP = 2-(N(omega)-L-arginino)succinate + AMP + diphosphate + H(+). It participates in amino-acid biosynthesis; L-arginine biosynthesis; L-arginine from L-ornithine and carbamoyl phosphate: step 2/3. This chain is Argininosuccinate synthase, found in Vibrio parahaemolyticus serotype O3:K6 (strain RIMD 2210633).